Here is a 578-residue protein sequence, read N- to C-terminus: Aspartate--tRNA ligase (578 aa).

Glu169 serves as a coordination point for L-aspartate. The aspartate stretch occupies residues 191 to 194 (QTFK). An L-aspartate-binding site is contributed by Arg213. ATP contacts are provided by residues 213–215 (RDE) and Gln222. His440 provides a ligand contact to L-aspartate. An ATP-binding site is contributed by Glu474. Residue Arg481 participates in L-aspartate binding. 526–529 (GLDR) is an ATP binding site.

Belongs to the class-II aminoacyl-tRNA synthetase family. Type 1 subfamily. Homodimer.

Its subcellular location is the cytoplasm. The catalysed reaction is tRNA(Asp) + L-aspartate + ATP = L-aspartyl-tRNA(Asp) + AMP + diphosphate. In terms of biological role, catalyzes the attachment of L-aspartate to tRNA(Asp) in a two-step reaction: L-aspartate is first activated by ATP to form Asp-AMP and then transferred to the acceptor end of tRNA(Asp). The protein is Aspartate--tRNA ligase of Ureaplasma parvum serovar 3 (strain ATCC 700970).